A 185-amino-acid polypeptide reads, in one-letter code: Elongation factor P (185 aa).

It belongs to the elongation factor P family.

Its subcellular location is the cytoplasm. The protein operates within protein biosynthesis; polypeptide chain elongation. Involved in peptide bond synthesis. Stimulates efficient translation and peptide-bond synthesis on native or reconstituted 70S ribosomes in vitro. Probably functions indirectly by altering the affinity of the ribosome for aminoacyl-tRNA, thus increasing their reactivity as acceptors for peptidyl transferase. The sequence is that of Elongation factor P from Clostridium botulinum (strain Alaska E43 / Type E3).